The sequence spans 231 residues: Eukaryotic translation initiation factor 4E-1 (231 aa).

EIF4G-binding stretches follow at residues 56–59 (HPLE) and 66–102 (FDNP…NNIH). MRNA is bound by residues 74-79 (RQTAWG), Lys-106, and 124-125 (WE). Cys-129 and Cys-167 are joined by a disulfide. The segment at 150 to 159 (YTLLAMIGHQ) is EIF4G-binding. MRNA-binding positions include 174–179 (RAKGEK) and 219–223 (KRLDR).

This sequence belongs to the eukaryotic initiation factor 4E family. As to quaternary structure, EIF4F is a multi-subunit complex, the composition of which varies with external and internal environmental conditions. It is composed of at least EIF4A, EIF4E and EIF4G. EIF4E is also known to interact with other partners. In higher plants two isoforms of EIF4F have been identified, named isoform EIF4F and isoform EIF(iso)4F. Isoform EIF4F has subunits p220 and p26, whereas isoform EIF(iso)4F has subunits p82 and p28. In terms of assembly, (Microbial infection) Interacts with potyvirus viral genome-linked protein (VPg); mostly with tobacco etch virus (TEV-HAT) VPg and, to a lower extent, with potato virus Y (PVY-LYE84 and PVY-LYE90) and pepper mottle virus (PepMoV) VPg. Post-translationally, according to the redox status, the Cys-129-Cys-167 disulfide bridge may have a role in regulating protein function by affecting its ability to bind capped mRNA.

It is found in the nucleus. It localises to the cytoplasm. Component of the protein complex eIF4F, which is involved in the recognition of the mRNA cap, ATP-dependent unwinding of 5'-terminal secondary structure and recruitment of mRNA to the ribosome. Recognizes and binds the 7-methylguanosine-containing mRNA cap during an early step in the initiation of protein synthesis and facilitates ribosome binding by inducing the unwinding of the mRNAs secondary structures. Key component of recessive resistance to potyviruses. In terms of biological role, (Microbial infection) Susceptibility host factor required for viral infection (e.g. potato virus Y (PVY), pepper mottle virus (PepMoV) and tobacco etch virus (TEV)) by recruiting viral RNAs to the host ribosomal complex via an interaction with viral genome-linked protein (VPg). The chain is Eukaryotic translation initiation factor 4E-1 from Solanum lycopersicum (Tomato).